Consider the following 172-residue polypeptide: Ribosome maturation factor RimM (172 aa).

Residues 100–172 (PGEYYRVDLV…RIVVDWDPGF (73 aa)) enclose the PRC barrel domain.

It belongs to the RimM family. As to quaternary structure, binds ribosomal protein uS19.

The protein resides in the cytoplasm. In terms of biological role, an accessory protein needed during the final step in the assembly of 30S ribosomal subunit, possibly for assembly of the head region. Essential for efficient processing of 16S rRNA. May be needed both before and after RbfA during the maturation of 16S rRNA. It has affinity for free ribosomal 30S subunits but not for 70S ribosomes. The sequence is that of Ribosome maturation factor RimM from Methylococcus capsulatus (strain ATCC 33009 / NCIMB 11132 / Bath).